Reading from the N-terminus, the 272-residue chain is Hydroxyacylglutathione hydrolase (272 aa).

Zn(2+) contacts are provided by histidine 62, histidine 64, aspartate 66, histidine 67, histidine 126, aspartate 146, and histidine 184.

The protein belongs to the metallo-beta-lactamase superfamily. Glyoxalase II family. Monomer. Zn(2+) serves as cofactor.

The catalysed reaction is an S-(2-hydroxyacyl)glutathione + H2O = a 2-hydroxy carboxylate + glutathione + H(+). Its pathway is secondary metabolite metabolism; methylglyoxal degradation; (R)-lactate from methylglyoxal: step 2/2. In terms of biological role, thiolesterase that catalyzes the hydrolysis of S-D-lactoyl-glutathione to form glutathione and D-lactic acid. The protein is Hydroxyacylglutathione hydrolase of Saccharophagus degradans (strain 2-40 / ATCC 43961 / DSM 17024).